Consider the following 446-residue polypeptide: Exodeoxyribonuclease 7 large subunit (446 aa).

This sequence belongs to the XseA family. In terms of assembly, heterooligomer composed of large and small subunits.

It localises to the cytoplasm. The enzyme catalyses Exonucleolytic cleavage in either 5'- to 3'- or 3'- to 5'-direction to yield nucleoside 5'-phosphates.. Its function is as follows. Bidirectionally degrades single-stranded DNA into large acid-insoluble oligonucleotides, which are then degraded further into small acid-soluble oligonucleotides. This Ligilactobacillus salivarius (strain UCC118) (Lactobacillus salivarius) protein is Exodeoxyribonuclease 7 large subunit.